The primary structure comprises 245 residues: Zinc finger CCCH domain-containing protein 54 (245 aa).

A C3H1-type zinc finger spans residues 92 to 119; sequence TYCAVACPAFRNGACHRGDSCEFAHGVF. Residues 175 to 204 are disordered; it reads GNGDGVTMRMDDEGYDTSRSPVRSGKDDLD.

Interacts with MARD1/FLZ9 and RD21A. As to expression, specifically expressed in embryo (at protein level).

The protein resides in the nucleus. Its function is as follows. Embryo-specific transcription factor required at the globular to heart stage transition in embryo development. The protein is Zinc finger CCCH domain-containing protein 54 of Arabidopsis thaliana (Mouse-ear cress).